Consider the following 231-residue polypeptide: Large ribosomal subunit protein uL1 (231 aa).

This sequence belongs to the universal ribosomal protein uL1 family. As to quaternary structure, part of the 50S ribosomal subunit.

Its function is as follows. Binds directly to 23S rRNA. The L1 stalk is quite mobile in the ribosome, and is involved in E site tRNA release. Protein L1 is also a translational repressor protein, it controls the translation of the L11 operon by binding to its mRNA. In Pseudomonas fluorescens (strain Pf0-1), this protein is Large ribosomal subunit protein uL1.